We begin with the raw amino-acid sequence, 301 residues long: Tyrosine recombinase XerC (301 aa).

A Core-binding (CB) domain is found at 2–84 (TNTQFYITNF…TLRSFFSYLY (83 aa)). The 187-residue stretch at 105-291 (ALPKFLTVDD…DLKHLIEVYD (187 aa)) folds into the Tyr recombinase domain. Residues R145, K169, H243, R246, and H269 contribute to the active site. Y278 serves as the catalytic O-(3'-phospho-DNA)-tyrosine intermediate.

This sequence belongs to the 'phage' integrase family. XerC subfamily. As to quaternary structure, forms a cyclic heterotetrameric complex composed of two molecules of XerC and two molecules of XerD.

It localises to the cytoplasm. Its function is as follows. Site-specific tyrosine recombinase, which acts by catalyzing the cutting and rejoining of the recombining DNA molecules. The XerC-XerD complex is essential to convert dimers of the bacterial chromosome into monomers to permit their segregation at cell division. It also contributes to the segregational stability of plasmids. The chain is Tyrosine recombinase XerC from Thermodesulfovibrio yellowstonii (strain ATCC 51303 / DSM 11347 / YP87).